A 212-amino-acid chain; its full sequence is Pyridoxine/pyridoxamine 5'-phosphate oxidase (212 aa).

Residues arginine 59–lysine 64, tyrosine 74–serine 75, lysine 81, and glutamine 103 each bind FMN. Residue lysine 64 participates in substrate binding. 2 residues coordinate substrate: tyrosine 121 and arginine 125. FMN contacts are provided by residues glutamine 138 to serine 139 and tryptophan 183. Arginine 189 to histidine 191 is a binding site for substrate. Residue arginine 193 coordinates FMN.

This sequence belongs to the pyridoxamine 5'-phosphate oxidase family. In terms of assembly, homodimer. Requires FMN as cofactor.

The catalysed reaction is pyridoxamine 5'-phosphate + O2 + H2O = pyridoxal 5'-phosphate + H2O2 + NH4(+). It catalyses the reaction pyridoxine 5'-phosphate + O2 = pyridoxal 5'-phosphate + H2O2. It participates in cofactor metabolism; pyridoxal 5'-phosphate salvage; pyridoxal 5'-phosphate from pyridoxamine 5'-phosphate: step 1/1. It functions in the pathway cofactor metabolism; pyridoxal 5'-phosphate salvage; pyridoxal 5'-phosphate from pyridoxine 5'-phosphate: step 1/1. Its function is as follows. Catalyzes the oxidation of either pyridoxine 5'-phosphate (PNP) or pyridoxamine 5'-phosphate (PMP) into pyridoxal 5'-phosphate (PLP). The polypeptide is Pyridoxine/pyridoxamine 5'-phosphate oxidase (Rhodopseudomonas palustris (strain BisB5)).